A 323-amino-acid chain; its full sequence is 2-methylene-furan-3-one reductase (323 aa).

NADP(+)-binding positions include lysine 59, 174–175 (GV), 197–200 (STKK), tyrosine 216, isoleucine 254, 265–267 (FVL), and 312–313 (RA). Position 59 (lysine 59) interacts with substrate.

Belongs to the zinc-containing alcohol dehydrogenase family. Quinone oxidoreductase subfamily. Monomer. The N-terminus is blocked. Expressed in parenchyma tissues of red fruits. Not found in vascular tissues. Also detected in the achenes.

The catalysed reaction is 4-hydroxy-2,5-dimethyl-furan-3(2H)-one + NADP(+) = 4-hydroxy-5-methyl-2-methylenefuran-3(2H)-one + NADPH + H(+). Functionally, enone oxidoreductase involved in the biosynthesis of 4-hydroxy-2,5-dimethyl-3(2H)-furanone (HDMF or furaneol), the key flavor compound in strawberries. Can use both NADH and NADPH as the electron donor. In Fragaria ananassa (Strawberry), this protein is 2-methylene-furan-3-one reductase (EO).